The sequence spans 326 residues: uncharacterized protein (326 aa).

This sequence to B.subtilis XkdQ.

This is an uncharacterized protein from Bacillus subtilis (strain 168).